The primary structure comprises 548 residues: Terpene synthase 1 (548 aa).

4 residues coordinate Mg(2+): aspartate 301, aspartate 305, aspartate 445, and glutamate 453. A DDXXD motif motif is present at residues 301 to 305; it reads DDTYD.

It belongs to the terpene synthase family. Tpsa subfamily. The cofactor is Mg(2+). Requires Mn(2+) as cofactor.

The catalysed reaction is (2E,6E)-farnesyl diphosphate = (+)-valencene + diphosphate. Its pathway is secondary metabolite biosynthesis; terpenoid biosynthesis. Its function is as follows. Sesquiterpene synthase involved in the biosynthesis of volatile compounds which contribute to fruit flavor and aroma. Mediates the conversion of (2E,6E)-farnesyl diphosphate (FPP) into (+)-valencene. No activity detected with geranyl diphosphate (GPP). The polypeptide is Terpene synthase 1 (Citrus sinensis (Sweet orange)).